A 35-amino-acid polypeptide reads, in one-letter code: Photosystem II reaction center protein T (35 aa).

A helical membrane pass occupies residues 3 to 23; the sequence is ALVYTFLLVSTLGIIFFAIFF.

It belongs to the PsbT family. In terms of assembly, PSII is composed of 1 copy each of membrane proteins PsbA, PsbB, PsbC, PsbD, PsbE, PsbF, PsbH, PsbI, PsbJ, PsbK, PsbL, PsbM, PsbT, PsbY, PsbZ, Psb30/Ycf12, at least 3 peripheral proteins of the oxygen-evolving complex and a large number of cofactors. It forms dimeric complexes.

It localises to the plastid. It is found in the chloroplast thylakoid membrane. Functionally, found at the monomer-monomer interface of the photosystem II (PS II) dimer, plays a role in assembly and dimerization of PSII. PSII is a light-driven water plastoquinone oxidoreductase, using light energy to abstract electrons from H(2)O, generating a proton gradient subsequently used for ATP formation. The sequence is that of Photosystem II reaction center protein T from Cycas revoluta (Sago palm).